A 253-amino-acid chain; its full sequence is Aminoglycoside nucleotidyltransferase (4') (253 aa).

An N-terminal domain region spans residues 1–127; that stretch reads MNGPIIMTRE…KVYQTAKSVE (127 aa). ATP-binding residues include serine 39, arginine 42, serine 49, aspartate 50, and glutamate 52. Mg(2+) is bound by residues aspartate 50 and glutamate 52. Neomycin B is bound by residues glutamate 52 and glutamate 67. The kanamycin A site is built by glutamate 67, lysine 74, glutamate 76, glutamate 141, and glutamate 145. The segment at 128 to 241 is C-terminal domain; the sequence is AQTFHDAICA…NGIQEWTERH (114 aa). Positions 145, 149, and 187 each coordinate ATP. A Mg(2+)-binding site is contributed by glutamate 145. Catalysis depends on glutamate 145, which acts as the Proton acceptor.

In terms of assembly, homodimer. Mg(2+) is required as a cofactor.

It catalyses the reaction amikacin + ATP = 4'-adenylylamikacin + diphosphate. The enzyme catalyses kanamycin A + ATP = 4'-adenylylkanamycin A + diphosphate. It carries out the reaction neomycin B + ATP = 4'-adenylylneomycin B + diphosphate. The catalysed reaction is paromomycin + ATP = 4'-adenylylparomomycin + diphosphate. It catalyses the reaction ribostamycin + ATP = 4'-adenylylribostamycin + diphosphate. The enzyme catalyses tobramycin + ATP = 4'-adenylyltobramycin + diphosphate. It carries out the reaction kanamycin A + CTP = 4'-cytidylylkanamycin A + diphosphate. The catalysed reaction is kanamycin A + GTP = 4'-guanylylkanamycin A + diphosphate. It catalyses the reaction kanamycin A + ITP = 4'-inosinylylkanamycin A + diphosphate. The enzyme catalyses dTTP + kanamycin A = 4'-thymidylylkanamycin A + diphosphate. It carries out the reaction kanamycin A + UTP = 4'-uridylylkanamycin A + diphosphate. The catalysed reaction is kanamycin A + dATP = 4'-(2'-deoxyadenylyl)kanamycin A + diphosphate. It catalyses the reaction kanamycin A + dCTP = 4'-(2'-deoxycytidylyl)kanamycin A + diphosphate. The enzyme catalyses kanamycin A + dGTP = 4'-(2'-deoxyguanylyl)kanamycin A + diphosphate. It carries out the reaction dUTP + kanamycin A = 4'-(2'-deoxyuridylyl)kanamycin A + diphosphate. The catalysed reaction is amikacin + GTP = 4'-guanylylamikacin + diphosphate. It catalyses the reaction amikacin + ITP = 4'-inosinylylamikacin + diphosphate. The enzyme catalyses amikacin + CTP = 4'-cytidylylamikacin + diphosphate. It carries out the reaction amikacin + UTP = 4'-uridylylamikacin + diphosphate. The catalysed reaction is amikacin + dTTP = 4'-thymidylylamikacin + diphosphate. Its function is as follows. Inactivates aminoglycoside antibiotics such as kanamycin by catalyzing the transfer of a nucleotidyl group from a wide variety of nucleoside triphosphates ((d)ATP, (d)CTP, (d)GTP, ITP, TTP and (d)UTP) to the 4'-hydroxyl group of the aminoglycoside. In vitro, antibiotics without the 4'-hydroxyl but possessing a 4''-hydroxyl group (e.g. sisomicin and gentamicin) are also modifed but with poor specificity. The 3' position of the NTP ribose ring does not tolerate large substitutions (e.g. ddATP) and dNTPs and TTP are better substrates than their NTP counterparts. A short (2.35 Angstrom) hydrogen bond initially facilitates tight binding of the substrate (between Glu-52 and antibiotic) that is subsequently disrupted by the assembly of the active ternary complex. This enables the release of products post-catalysis, a 'catch and release' mechanism. This Staphylococcus aureus protein is Aminoglycoside nucleotidyltransferase (4') (knt).